The chain runs to 99 residues: Aspartyl/glutamyl-tRNA(Asn/Gln) amidotransferase subunit C (99 aa).

Belongs to the GatC family. As to quaternary structure, heterotrimer of A, B and C subunits.

The catalysed reaction is L-glutamyl-tRNA(Gln) + L-glutamine + ATP + H2O = L-glutaminyl-tRNA(Gln) + L-glutamate + ADP + phosphate + H(+). It catalyses the reaction L-aspartyl-tRNA(Asn) + L-glutamine + ATP + H2O = L-asparaginyl-tRNA(Asn) + L-glutamate + ADP + phosphate + 2 H(+). Functionally, allows the formation of correctly charged Asn-tRNA(Asn) or Gln-tRNA(Gln) through the transamidation of misacylated Asp-tRNA(Asn) or Glu-tRNA(Gln) in organisms which lack either or both of asparaginyl-tRNA or glutaminyl-tRNA synthetases. The reaction takes place in the presence of glutamine and ATP through an activated phospho-Asp-tRNA(Asn) or phospho-Glu-tRNA(Gln). In Cupriavidus taiwanensis (strain DSM 17343 / BCRC 17206 / CCUG 44338 / CIP 107171 / LMG 19424 / R1) (Ralstonia taiwanensis (strain LMG 19424)), this protein is Aspartyl/glutamyl-tRNA(Asn/Gln) amidotransferase subunit C.